Consider the following 66-residue polypeptide: uncharacterized protein (66 aa).

Helical transmembrane passes span 4–24 (ALFI…LLIF) and 38–58 (LLTP…ILVL).

The protein localises to the membrane. This is an uncharacterized protein from Saccharomyces cerevisiae (strain ATCC 204508 / S288c) (Baker's yeast).